A 414-amino-acid polypeptide reads, in one-letter code: Transposon Ty4-J Gag polyprotein (414 aa).

The stretch at 39 to 115 (RKVSIKDEQV…IQLLETNENN (77 aa)) forms a coiled coil. Positions 378-414 (GAQRQQPLKSSAKRTKVLEQDTKKVEQSVQQQKTGNY) are disordered. Residues 393-403 (KVLEQDTKKVE) show a composition bias toward basic and acidic residues. A compositionally biased stretch (polar residues) spans 404 to 414 (QSVQQQKTGNY).

Capsid protein (CA) is the structural component of the virus-like particle (VLP), forming the shell that encapsulates the retrotransposons dimeric RNA genome. The protein is Transposon Ty4-J Gag polyprotein (TY4A-J) of Saccharomyces cerevisiae (strain ATCC 204508 / S288c) (Baker's yeast).